The primary structure comprises 283 residues: Pantothenate synthetase (283 aa).

30–37 is a binding site for ATP; sequence MGYLHEGH. His37 acts as the Proton donor in catalysis. Gln61 is a binding site for (R)-pantoate. Gln61 is a binding site for beta-alanine. Residue 147-150 participates in ATP binding; it reads GQKD. Gln153 is a (R)-pantoate binding site. ATP-binding positions include Val176 and 184 to 187; that span reads MSSR.

It belongs to the pantothenate synthetase family. As to quaternary structure, homodimer.

The protein resides in the cytoplasm. The enzyme catalyses (R)-pantoate + beta-alanine + ATP = (R)-pantothenate + AMP + diphosphate + H(+). The protein operates within cofactor biosynthesis; (R)-pantothenate biosynthesis; (R)-pantothenate from (R)-pantoate and beta-alanine: step 1/1. Its function is as follows. Catalyzes the condensation of pantoate with beta-alanine in an ATP-dependent reaction via a pantoyl-adenylate intermediate. The sequence is that of Pantothenate synthetase from Thermoanaerobacter pseudethanolicus (strain ATCC 33223 / 39E) (Clostridium thermohydrosulfuricum).